A 322-amino-acid chain; its full sequence is Eukaryotic translation initiation factor 3 subunit I (322 aa).

WD repeat units follow at residues 4–43, 46–85, 141–180, 184–223, and 281–322; these read GHER…RLGT, GHQG…VIAS, MVES…KVVD, DHTA…CLKT, and GHFG…NIFE.

Belongs to the eIF-3 subunit I family. In terms of assembly, component of the eukaryotic translation initiation factor 3 (eIF-3) complex. The eIF-3 complex interacts with pix.

The protein resides in the cytoplasm. Component of the eukaryotic translation initiation factor 3 (eIF-3) complex, which is involved in protein synthesis of a specialized repertoire of mRNAs and, together with other initiation factors, stimulates binding of mRNA and methionyl-tRNAi to the 40S ribosome. The eIF-3 complex specifically targets and initiates translation of a subset of mRNAs involved in cell proliferation. The protein is Eukaryotic translation initiation factor 3 subunit I of Drosophila virilis (Fruit fly).